The sequence spans 122 residues: Large ribosomal subunit protein uL14 (122 aa).

Belongs to the universal ribosomal protein uL14 family. As to quaternary structure, part of the 50S ribosomal subunit. Forms a cluster with proteins L3 and L19. In the 70S ribosome, L14 and L19 interact and together make contacts with the 16S rRNA in bridges B5 and B8.

Its function is as follows. Binds to 23S rRNA. Forms part of two intersubunit bridges in the 70S ribosome. This chain is Large ribosomal subunit protein uL14, found in Carsonella ruddii (strain PV).